We begin with the raw amino-acid sequence, 162 residues long: Disulfide bond formation protein B (162 aa).

Topologically, residues 1–10 (MGDWLLRRRG) are cytoplasmic. A helical transmembrane segment spans residues 11 to 27 (LALLLVLTLLLNLGALG). Residues 28-45 (LEYLADMPPCPLCWVQRG) are Periplasmic-facing. An intrachain disulfide couples Cys37 to Cys40. Residues 46 to 62 (VFGLMSLVALVGLVYFP) traverse the membrane as a helical segment. At 63 to 68 (RGWGRW) the chain is on the cytoplasmic side. A helical transmembrane segment spans residues 69-86 (PLAGALGLSALTGVIIAL). Topologically, residues 87-140 (RHLYIQANPDAVSCGMSPEVLAQFLPWWEVLLEILSGTTDCTQVDAVLGVPLPG) are periplasmic. Cysteines 100 and 127 form a disulfide. A helical transmembrane segment spans residues 141–159 (WTLVGYLALGALGLYAVLA). The Cytoplasmic portion of the chain corresponds to 160–162 (RRA).

Belongs to the DsbB family.

The protein resides in the cell inner membrane. Its function is as follows. Required for disulfide bond formation in some periplasmic proteins. Acts by oxidizing the DsbA protein. In Alkalilimnicola ehrlichii (strain ATCC BAA-1101 / DSM 17681 / MLHE-1), this protein is Disulfide bond formation protein B.